The sequence spans 232 residues: Phosphatidylserine decarboxylase proenzyme (232 aa).

The active-site Schiff-base intermediate with substrate; via pyruvic acid is Ser-190. Residue Ser-190 is modified to Pyruvic acid (Ser); by autocatalysis.

This sequence belongs to the phosphatidylserine decarboxylase family. PSD-A subfamily. In terms of assembly, heterodimer of a large membrane-associated beta subunit and a small pyruvoyl-containing alpha subunit. It depends on pyruvate as a cofactor. Is synthesized initially as an inactive proenzyme. Formation of the active enzyme involves a self-maturation process in which the active site pyruvoyl group is generated from an internal serine residue via an autocatalytic post-translational modification. Two non-identical subunits are generated from the proenzyme in this reaction, and the pyruvate is formed at the N-terminus of the alpha chain, which is derived from the carboxyl end of the proenzyme. The post-translation cleavage follows an unusual pathway, termed non-hydrolytic serinolysis, in which the side chain hydroxyl group of the serine supplies its oxygen atom to form the C-terminus of the beta chain, while the remainder of the serine residue undergoes an oxidative deamination to produce ammonia and the pyruvoyl prosthetic group on the alpha chain.

The protein localises to the cell membrane. It carries out the reaction a 1,2-diacyl-sn-glycero-3-phospho-L-serine + H(+) = a 1,2-diacyl-sn-glycero-3-phosphoethanolamine + CO2. It functions in the pathway phospholipid metabolism; phosphatidylethanolamine biosynthesis; phosphatidylethanolamine from CDP-diacylglycerol: step 2/2. Functionally, catalyzes the formation of phosphatidylethanolamine (PtdEtn) from phosphatidylserine (PtdSer). Important for establishment of root nodule symbiosis with the host plant. The chain is Phosphatidylserine decarboxylase proenzyme from Rhizobium meliloti (strain 1021) (Ensifer meliloti).